Reading from the N-terminus, the 253-residue chain is UPF0246 protein lhv_1883 (253 aa).

Belongs to the UPF0246 family.

This Lactobacillus helveticus (strain DPC 4571) protein is UPF0246 protein lhv_1883.